A 152-amino-acid polypeptide reads, in one-letter code: Transcriptional regulator MraZ (152 aa).

SpoVT-AbrB domains lie at 5 to 52 (ATLV…PLPE) and 81 to 124 (ASEC…DETT).

This sequence belongs to the MraZ family. As to quaternary structure, forms oligomers.

The protein localises to the cytoplasm. It is found in the nucleoid. Its function is as follows. Negatively regulates its own expression and that of the subsequent genes in the proximal part of the division and cell wall (dcw) gene cluster. Acts by binding directly to DNA. May also regulate the expression of genes outside the dcw cluster. In Salmonella gallinarum (strain 287/91 / NCTC 13346), this protein is Transcriptional regulator MraZ.